The sequence spans 207 residues: Glycerol-3-phosphate acyltransferase (207 aa).

5 helical membrane-spanning segments follow: residues 3 to 23 (LIGL…VWVG), 54 to 74 (TIVM…PIVF), 81 to 101 (GTAT…VSIF), 122 to 142 (PIMF…TSIV), and 158 to 178 (LVFQ…FVFY).

This sequence belongs to the PlsY family. As to quaternary structure, probably interacts with PlsX.

The protein localises to the cell membrane. The enzyme catalyses an acyl phosphate + sn-glycerol 3-phosphate = a 1-acyl-sn-glycero-3-phosphate + phosphate. The protein operates within lipid metabolism; phospholipid metabolism. In terms of biological role, catalyzes the transfer of an acyl group from acyl-phosphate (acyl-PO(4)) to glycerol-3-phosphate (G3P) to form lysophosphatidic acid (LPA). This enzyme utilizes acyl-phosphate as fatty acyl donor, but not acyl-CoA or acyl-ACP. The polypeptide is Glycerol-3-phosphate acyltransferase (Levilactobacillus brevis (strain ATCC 367 / BCRC 12310 / CIP 105137 / JCM 1170 / LMG 11437 / NCIMB 947 / NCTC 947) (Lactobacillus brevis)).